The chain runs to 311 residues: uncharacterized protein (311 aa).

10 helical membrane passes run 6–26 (IFIL…KMLA), 33–53 (PFQV…PMAV), 70–90 (YLAL…QFAV), 97–117 (TAAV…YFIL), 123–143 (GITI…FNPA), 155–175 (LIGI…TVIS), 185–205 (YVFN…LLVV), 219–239 (ILVL…CYLG), 244–264 (TSAV…TVLA), and 265–285 (ILIL…FIII). EamA domains lie at 12 to 141 (AIFY…IIFN) and 166 to 292 (VVWS…INYS).

This sequence belongs to the EamA transporter family.

The protein resides in the cell membrane. This is an uncharacterized protein from Clostridium kluyveri (strain ATCC 8527 / DSM 555 / NBRC 12016 / NCIMB 10680 / K1).